The chain runs to 341 residues: Golgi-associated RAB2 interactor protein 1B (341 aa).

This sequence belongs to the GARIN family. Expressed in testis (at protein level).

It localises to the golgi apparatus. Its function is as follows. RAB2B effector protein required for accurate acrosome formation and normal male fertility. In complex with RAB2A/RAB2B, seems to suppress excessive vesicle trafficking during acrosome formation. The protein is Golgi-associated RAB2 interactor protein 1B of Mus musculus (Mouse).